Consider the following 396-residue polypeptide: Putative nickel insertion protein (396 aa).

The protein belongs to the LarC family.

The sequence is that of Putative nickel insertion protein from Methanococcoides burtonii (strain DSM 6242 / NBRC 107633 / OCM 468 / ACE-M).